The chain runs to 461 residues: WTLSLLLGAVVGNEVCYERLGCFSDDSPWAGIVERPLKILPWSPEKVNTRFLLYTNENPDNFQEIVADPSTIQSSNFNTGRKTRFIIHGFIDKGEESWLSTMCQNMFKVESVNCICVDWKSGSRTAYSQASQNVRIVGAEVAYLVGVLQSSFDYSPSNVHIIGHSLGSHAAGEAGRRTNGAVGRITGLDPAEPCFQGTPELVRLDPSDAQFVDVIHTDIAPFIPNLGFGMSQTAGHLDFFPNGGKEMPGCQKNVLSQIVDIDGIWQGTRDFAACNHLRSYKYYTDSILNPDGFAGFSCASYSDFTANKCFPCSSEGCPQMGHYADRFPGRTKGVGQLFYLNTGDASNFARWRYRVDVTLSGKKVTGHVLVSLFGNKGNSRQYEIFQGTLKPDNTYSNEFDSDVEVGDLEKVKFIWYNNVINLTLPKVGASKITVERNDGSVFNFCSEETVREDVLLTLTAC.

Positions 1–12 (WTLSLLLGAVVG) are cleaved as a signal peptide. Disulfide bonds link C16–C22 and C103–C114. Residue S165 is the Nucleophile of the active site. The active-site Charge relay system is D189. The Ca(2+) site is built by E200, R203, D205, and D208. C250 and C274 are oxidised to a cystine. H276 acts as the Charge relay system in catalysis. Disulfide bonds link C298–C309, C312–C317, and C445–C461. One can recognise a PLAT domain in the interval 351–461 (WRYRVDVTLS…EDVLLTLTAC (111 aa)).

Belongs to the AB hydrolase superfamily. Lipase family. As to quaternary structure, forms a 1:1 stoichiometric complex with (pro)colipase/CLPS.

The protein localises to the secreted. It catalyses the reaction a triacylglycerol + H2O = a diacylglycerol + a fatty acid + H(+). It carries out the reaction 1,2,3-tributanoylglycerol + H2O = dibutanoylglycerol + butanoate + H(+). The catalysed reaction is 1,2,3-tri-(9Z-octadecenoyl)-glycerol + H2O = di-(9Z)-octadecenoylglycerol + (9Z)-octadecenoate + H(+). The enzyme catalyses all-trans-retinyl hexadecanoate + H2O = all-trans-retinol + hexadecanoate + H(+). It catalyses the reaction 1,2-di-(9Z-octadecenoyl)-glycerol + H2O = (9Z-octadecenoyl)-glycerol + (9Z)-octadecenoate + H(+). Its activity is regulated as follows. Inhibited by bile salts, is reactivated by (pro)colipase/CLPS. In terms of biological role, plays an important role in fat metabolism. It preferentially splits the esters of long-chain fatty acids at positions 1 and 3, producing mainly 2-monoacylglycerol and free fatty acids, and shows considerably higher activity against insoluble emulsified substrates than against soluble ones. In Equus caballus (Horse), this protein is Pancreatic triacylglycerol lipase (PNLIP).